Here is a 348-residue protein sequence, read N- to C-terminus: ATPase GET3 (348 aa).

26–33 (KGGVGKTT) is an ATP binding site. Asp57 is an active-site residue. Glu241 and Asn268 together coordinate ATP. Zn(2+)-binding residues include Cys280 and Cys283. 310-312 (PLL) contacts ATP.

This sequence belongs to the arsA ATPase family. In terms of assembly, homodimer. Component of the Golgi to ER traffic (GET) complex, which is composed of GET1, GET2 and GET3. Within the complex, GET1 and GET2 form a heterotetramer which is stabilized by phosphatidylinositol binding and which binds to the GET3 homodimer. Interacts with the chloride channel protein GEF1.

It is found in the cytoplasm. It localises to the endoplasmic reticulum. The protein resides in the golgi apparatus. ATPase required for the post-translational delivery of tail-anchored (TA) proteins to the endoplasmic reticulum. Recognizes and selectively binds the transmembrane domain of TA proteins in the cytosol. This complex then targets to the endoplasmic reticulum by membrane-bound receptors GET1 and GET2, where the tail-anchored protein is released for insertion. This process is regulated by ATP binding and hydrolysis. ATP binding drives the homodimer towards the closed dimer state, facilitating recognition of newly synthesized TA membrane proteins. ATP hydrolysis is required for insertion. Subsequently, the homodimer reverts towards the open dimer state, lowering its affinity for the GET1-GET2 receptor, and returning it to the cytosol to initiate a new round of targeting. Cooperates with the HDEL receptor ERD2 to mediate the ATP-dependent retrieval of resident ER proteins that contain a C-terminal H-D-E-L retention signal from the Golgi to the ER. Involved in low-level resistance to the oxyanions arsenite and arsenate, and in heat tolerance. In Debaryomyces hansenii (strain ATCC 36239 / CBS 767 / BCRC 21394 / JCM 1990 / NBRC 0083 / IGC 2968) (Yeast), this protein is ATPase GET3.